A 629-amino-acid polypeptide reads, in one-letter code: Serine/threonine-protein kinase ICK (629 aa).

A Protein kinase domain is found at 4-284 (YTTIKQLGDG…ASQALRYPYF (281 aa)). ATP-binding positions include 10-18 (LGDGTYGSV) and K33. The active-site Proton acceptor is the D125. T157 bears the Phosphothreonine mark. Y159 is modified (phosphotyrosine). S161 is subject to Phosphoserine. 3 disordered regions span residues 292 to 322 (ISTQ…PAQA), 454 to 482 (PSEP…QSTA), and 579 to 629 (GYSS…PSRR). A compositionally biased stretch (pro residues) spans 309–321 (GPPPYVKPAPPAQ). Positions 460-482 (TGTSVSTQASSQRRDTPTLQSTA) are enriched in polar residues.

Belongs to the protein kinase superfamily. CMGC Ser/Thr protein kinase family. CDC2/CDKX subfamily. Mg(2+) serves as cofactor. Post-translationally, autophosphorylated on serine and threonine residues. Phosphorylation at Thr-157 increases kinase activity. Expressed in embryonic heart from day 11. Highly expressed in the uterus and at lower levels in brain, heart, lung, kidney, skeletal muscle, ovary and liver in adult tissues.

Its subcellular location is the cytoplasm. It localises to the cell projection. It is found in the cilium. The protein resides in the nucleus. The protein localises to the cytoskeleton. Its subcellular location is the cilium basal body. The catalysed reaction is L-seryl-[protein] + ATP = O-phospho-L-seryl-[protein] + ADP + H(+). It catalyses the reaction L-threonyl-[protein] + ATP = O-phospho-L-threonyl-[protein] + ADP + H(+). In terms of biological role, required for ciliogenesis, particularly in neuronal and retinal progenitor cells. Phosphorylates KIF3A. Involved in the control of ciliary length. Regulates the ciliary localization of SHH pathway components as well as the localization of IFT components at ciliary tips. May play a role in cardiac development. Regulates intraflagellar transport (IFT) speed and negatively regulates cilium length in a cAMP and mTORC1 signaling-dependent manner and this regulation requires its kinase activity. The sequence is that of Serine/threonine-protein kinase ICK (Cilk1) from Rattus norvegicus (Rat).